The sequence spans 185 residues: Elongation factor P (185 aa).

Belongs to the elongation factor P family.

The protein resides in the cytoplasm. Its pathway is protein biosynthesis; polypeptide chain elongation. Its function is as follows. Involved in peptide bond synthesis. Stimulates efficient translation and peptide-bond synthesis on native or reconstituted 70S ribosomes in vitro. Probably functions indirectly by altering the affinity of the ribosome for aminoacyl-tRNA, thus increasing their reactivity as acceptors for peptidyl transferase. The chain is Elongation factor P from Oceanobacillus iheyensis (strain DSM 14371 / CIP 107618 / JCM 11309 / KCTC 3954 / HTE831).